The sequence spans 367 residues: Anhydro-N-acetylmuramic acid kinase (367 aa).

13–20 (GTSMDGAD) contributes to the ATP binding site.

The protein belongs to the anhydro-N-acetylmuramic acid kinase family.

The catalysed reaction is 1,6-anhydro-N-acetyl-beta-muramate + ATP + H2O = N-acetyl-D-muramate 6-phosphate + ADP + H(+). The protein operates within amino-sugar metabolism; 1,6-anhydro-N-acetylmuramate degradation. Its pathway is cell wall biogenesis; peptidoglycan recycling. Catalyzes the specific phosphorylation of 1,6-anhydro-N-acetylmuramic acid (anhMurNAc) with the simultaneous cleavage of the 1,6-anhydro ring, generating MurNAc-6-P. Is required for the utilization of anhMurNAc either imported from the medium or derived from its own cell wall murein, and thus plays a role in cell wall recycling. The sequence is that of Anhydro-N-acetylmuramic acid kinase from Neisseria meningitidis serogroup C / serotype 2a (strain ATCC 700532 / DSM 15464 / FAM18).